The following is a 229-amino-acid chain: MAPHDPGSLTTLVPWAAALLLALGVERALALPEICTQCPGSVQNLSKVAFYCKTTRELMLHARCCLNQKGTILGLDLQNCSLEDPGPNFHQAHTTVIIDLQANPLKGDLANTFRGFTQLQTLILPQHVNCPGGINAWNTITSYIDNQICQGQKNLCNNTGDPEMCPENGSCVPDGPGLLQCVCADGFHGYKCMRQGSFSLLMFFGILGATTLSVSILLWATQRRKAKTS.

A signal peptide spans 1–30 (MAPHDPGSLTTLVPWAAALLLALGVERALA). The Extracellular segment spans residues 31 to 199 (LPEICTQCPG…YKCMRQGSFS (169 aa)). Residues Asn44, Asn79, Asn157, and Asn168 are each glycosylated (N-linked (GlcNAc...) asparagine). In terms of domain architecture, EGF-like spans 152 to 193 (QKNLCNNTGDPEMCPENGSCVPDGPGLLQCVCADGFHGYKCM). 3 disulfide bridges follow: Cys156–Cys171, Cys165–Cys181, and Cys183–Cys192. A helical transmembrane segment spans residues 200–220 (LLMFFGILGATTLSVSILLWA). Residues 221–229 (TQRRKAKTS) are Cytoplasmic-facing.

As to quaternary structure, interacts with NELL1; the interaction promotes osteoblastic differentiation and mineralization. Interacts with SLC37A3; the interaction is direct and both proteins are mutually dependent for their stability. As to expression, weakly expressed in hematopoietic cell lines.

The protein resides in the nucleus envelope. The protein localises to the cell membrane. It localises to the lysosome membrane. Its function is as follows. Promotes osteoblast cell differentiation and terminal mineralization. Plays a role in inducing the cell cycle arrest via inhibiting CCND1 expression in all-trans-retinoic acid (ATRA) signal pathway. In osteoclasts, forms a transporter complex with ATRAID for nitrogen-containing-bisphophonates (N-BPs) required for releasing N-BP molecules that have trafficked to lysosomes through fluid-phase endocytosis into the cytosol. The chain is All-trans retinoic acid-induced differentiation factor from Homo sapiens (Human).